We begin with the raw amino-acid sequence, 753 residues long: Fatty acid oxidation complex subunit alpha (753 aa).

Positions 8–197 (SVTHPAFTLN…KMGLVDDVVP (190 aa)) are enoyl-CoA hydratase. A 3-hydroxyacyl-CoA dehydrogenase region spans residues 313 to 747 (RAIHRVGVLG…FYPVDANIDE (435 aa)). The tract at residues 593–622 (SNPTLHSNSTKNSSPTKNGNSPAKRNSFKW) is disordered. The span at 599–614 (SNSTKNSSPTKNGNSP) shows a compositional bias: low complexity.

In the N-terminal section; belongs to the enoyl-CoA hydratase/isomerase family. It in the central section; belongs to the 3-hydroxyacyl-CoA dehydrogenase family. In terms of assembly, heterotetramer of two alpha chains (FadJ) and two beta chains (FadI).

The protein resides in the cytoplasm. It catalyses the reaction a (3S)-3-hydroxyacyl-CoA = a (2E)-enoyl-CoA + H2O. It carries out the reaction a 4-saturated-(3S)-3-hydroxyacyl-CoA = a (3E)-enoyl-CoA + H2O. The enzyme catalyses a (3S)-3-hydroxyacyl-CoA + NAD(+) = a 3-oxoacyl-CoA + NADH + H(+). The catalysed reaction is (3S)-3-hydroxybutanoyl-CoA = (3R)-3-hydroxybutanoyl-CoA. The protein operates within lipid metabolism; fatty acid beta-oxidation. Catalyzes the formation of a hydroxyacyl-CoA by addition of water on enoyl-CoA. Also exhibits 3-hydroxyacyl-CoA epimerase and 3-hydroxyacyl-CoA dehydrogenase activities. This is Fatty acid oxidation complex subunit alpha from Yersinia pseudotuberculosis serotype I (strain IP32953).